The sequence spans 222 residues: Thymidylate kinase (222 aa).

An ATP-binding site is contributed by Gly10–Ser17.

This sequence belongs to the thymidylate kinase family.

It carries out the reaction dTMP + ATP = dTDP + ADP. Its function is as follows. Phosphorylation of dTMP to form dTDP in both de novo and salvage pathways of dTTP synthesis. The protein is Thymidylate kinase of Alteromonas mediterranea (strain DSM 17117 / CIP 110805 / LMG 28347 / Deep ecotype).